We begin with the raw amino-acid sequence, 308 residues long: uncharacterized protein (308 aa).

10 consecutive transmembrane segments (helical) span residues Leu-45–Leu-65, Ser-69–Leu-89, Ile-100–Ala-120, Asn-122–Tyr-142, Val-151–Asn-171, Ile-172–Ser-192, Thr-201–Phe-221, Phe-226–Val-246, Ala-263–Ala-283, and Ile-285–Ser-305. EamA domains follow at residues Leu-52–Gly-166 and Leu-178–Leu-306.

The protein belongs to the EamA transporter family.

It localises to the cell membrane. This is an uncharacterized protein from Archaeoglobus fulgidus (strain ATCC 49558 / DSM 4304 / JCM 9628 / NBRC 100126 / VC-16).